Consider the following 777-residue polypeptide: 1,4-alpha-glucan branching enzyme GlgB (777 aa).

Aspartate 408 acts as the Nucleophile in catalysis. Glutamate 461 (proton donor) is an active-site residue.

Belongs to the glycosyl hydrolase 13 family. GlgB subfamily. Monomer.

It catalyses the reaction Transfers a segment of a (1-&gt;4)-alpha-D-glucan chain to a primary hydroxy group in a similar glucan chain.. Its pathway is glycan biosynthesis; glycogen biosynthesis. In terms of biological role, catalyzes the formation of the alpha-1,6-glucosidic linkages in glycogen by scission of a 1,4-alpha-linked oligosaccharide from growing alpha-1,4-glucan chains and the subsequent attachment of the oligosaccharide to the alpha-1,6 position. This chain is 1,4-alpha-glucan branching enzyme GlgB, found in Actinobacillus pleuropneumoniae serotype 7 (strain AP76).